The primary structure comprises 123 residues: Ribonuclease P protein component (123 aa).

It belongs to the RnpA family. In terms of assembly, consists of a catalytic RNA component (M1 or rnpB) and a protein subunit.

It catalyses the reaction Endonucleolytic cleavage of RNA, removing 5'-extranucleotides from tRNA precursor.. Its function is as follows. RNaseP catalyzes the removal of the 5'-leader sequence from pre-tRNA to produce the mature 5'-terminus. It can also cleave other RNA substrates such as 4.5S RNA. The protein component plays an auxiliary but essential role in vivo by binding to the 5'-leader sequence and broadening the substrate specificity of the ribozyme. In Bordetella bronchiseptica (strain ATCC BAA-588 / NCTC 13252 / RB50) (Alcaligenes bronchisepticus), this protein is Ribonuclease P protein component.